The following is a 257-amino-acid chain: Diphthine synthase (257 aa).

S-adenosyl-L-methionine-binding positions include Ile-11, Asp-89, Ile-92, Ser-117–Val-118, Leu-169, Leu-210, and His-235.

This sequence belongs to the diphthine synthase family. As to quaternary structure, homodimer.

The catalysed reaction is 2-[(3S)-amino-3-carboxypropyl]-L-histidyl-[translation elongation factor 2] + 3 S-adenosyl-L-methionine = diphthine-[translation elongation factor 2] + 3 S-adenosyl-L-homocysteine + 3 H(+). The protein operates within protein modification; peptidyl-diphthamide biosynthesis. Functionally, S-adenosyl-L-methionine-dependent methyltransferase that catalyzes the trimethylation of the amino group of the modified target histidine residue in translation elongation factor 2 (EF-2), to form an intermediate called diphthine. The three successive methylation reactions represent the second step of diphthamide biosynthesis. In Saccharolobus solfataricus (strain ATCC 35092 / DSM 1617 / JCM 11322 / P2) (Sulfolobus solfataricus), this protein is Diphthine synthase.